The primary structure comprises 515 residues: Histidine ammonia-lyase (515 aa).

Positions 142-144 (ASG) form a cross-link, 5-imidazolinone (Ala-Gly). Ser-143 carries the post-translational modification 2,3-didehydroalanine (Ser).

The protein belongs to the PAL/histidase family. In terms of processing, contains an active site 4-methylidene-imidazol-5-one (MIO), which is formed autocatalytically by cyclization and dehydration of residues Ala-Ser-Gly.

It is found in the cytoplasm. It catalyses the reaction L-histidine = trans-urocanate + NH4(+). It participates in amino-acid degradation; L-histidine degradation into L-glutamate; N-formimidoyl-L-glutamate from L-histidine: step 1/3. This chain is Histidine ammonia-lyase, found in Bradyrhizobium sp. (strain ORS 278).